Reading from the N-terminus, the 167-residue chain is Small ribosomal subunit protein uS5 (167 aa).

The S5 DRBM domain maps to 12-75 (LQEKLVQVNR…EAARRNMIQV (64 aa)).

Belongs to the universal ribosomal protein uS5 family. In terms of assembly, part of the 30S ribosomal subunit. Contacts proteins S4 and S8.

Its function is as follows. With S4 and S12 plays an important role in translational accuracy. In terms of biological role, located at the back of the 30S subunit body where it stabilizes the conformation of the head with respect to the body. This chain is Small ribosomal subunit protein uS5, found in Alcanivorax borkumensis (strain ATCC 700651 / DSM 11573 / NCIMB 13689 / SK2).